The chain runs to 717 residues: F-box only protein 42 (717 aa).

Positions 1–30 (MASSSDSEDDSVMAVDQEETALEGTMEQDE) are enriched in acidic residues. The interval 1 to 34 (MASSSDSEDDSVMAVDQEETALEGTMEQDEDPHP) is disordered. The 50-residue stretch at 44 to 93 (NRSMSELPEEVLEYILSFLSPYQEHKTAALVCKQWYRLIKGVAHQCYHGF) folds into the F-box domain. Kelch repeat units follow at residues 132–184 (SMYV…VYKD), 186–242 (LVLF…VIGD), 244–293 (MIVF…VIDD), and 295–342 (TLLI…LWCH). Residues 361 to 452 (RAPLSPSLNS…NLSPGTVAVG (92 aa)) are disordered. Residues 363-376 (PLSPSLNSRPSPIS) are compositionally biased toward low complexity. 2 positions are modified to phosphoserine: Ser-365 and Ser-373. Position 378 is a phosphothreonine (Thr-378). The segment covering 416–426 (QRQTPSGSREG) has biased composition (polar residues). Residue Ser-552 is modified to Phosphoserine. Residues 570-595 (GPSASAALSPPLGSSPSSPGSQSLSS) show a composition bias toward low complexity. Residues 570–632 (GPSASAALSP…HHPPQSLNVG (63 aa)) are disordered.

As to quaternary structure, component of some SCF complex, composed of CUL1, SKP1, RBX1 and FBXO42. Interacts (via the kelch domain) with p53/TP53; interaction is direct.

Substrate-recognition component of some SCF (SKP1-CUL1-F-box protein)-type E3 ubiquitin ligase complex. Specifically recognizes p53/TP53, promoting its ubiquitination and degradation. The protein is F-box only protein 42 (Fbxo42) of Mus musculus (Mouse).